The following is a 174-amino-acid chain: Gamma-crystallin D (174 aa).

2 consecutive Beta/gamma crystallin 'Greek key' domains span residues 2 to 40 and 41 to 83; these read GKIT…RVDS and GCWM…RLIP. The connecting peptide stretch occupies residues 84–87; sequence HAGS. 2 consecutive Beta/gamma crystallin 'Greek key' domains span residues 88 to 128 and 129 to 171; these read HRIR…NVLE and GCWV…RRVM.

It belongs to the beta/gamma-crystallin family. As to expression, detected in the superior olivary complex of the auditory hindbrain.

In terms of biological role, crystallins are the dominant structural components of the vertebrate eye lens. This is Gamma-crystallin D (Crygd) from Mus musculus (Mouse).